The chain runs to 251 residues: Maleate isomerase (251 aa).

Substrate is bound by residues asparagine 14, 76–78, tyrosine 133, and asparagine 163; that span reads CLV. Cysteine 76 (nucleophile) is an active-site residue. Position 76 is an S-(2-succinyl)cysteine (cysteine 76). The active-site Proton donor is cysteine 194. Residue 195–196 coordinates substrate; that stretch reads VQ.

It belongs to the maleate isomerase family. As to quaternary structure, homodimer.

The enzyme catalyses maleate = fumarate. In terms of biological role, catalyzes cis-trans isomerization of the C2-C3 double bond in maleate to yield fumarate. Shows a strict specificity for maleate, with no activity detected toward structurally related substrates including citraconate, mesaconate, dimethylmaleate, and maleamide. This chain is Maleate isomerase, found in Nocardia farcinica (strain IFM 10152).